The chain runs to 274 residues: Large ribosomal subunit protein uL2cz/uL2cy (274 aa).

Positions 224-274 (NPVDHPHGGGEGRAPIGRKKPATPWGYPALGRRSRKRNKYSDNLILRRRSK) are disordered.

Belongs to the universal ribosomal protein uL2 family. As to quaternary structure, part of the 50S ribosomal subunit.

The protein resides in the plastid. It is found in the chloroplast. This chain is Large ribosomal subunit protein uL2cz/uL2cy (rpl2-A), found in Carica papaya (Papaya).